We begin with the raw amino-acid sequence, 1090 residues long: Protein transport protein Sec24A (1090 aa).

Disordered regions lie at residues 1–260 (MAQP…AHNT) and 272–325 (TPQL…TQTP). Residues 8–28 (AARGAAASLQAQNGAASASGS) show a composition bias toward low complexity. 3 stretches are compositionally biased toward polar residues: residues 29–55 (PYTNGPVHNTLMSPQVSSSQGYDSQPP), 138–151 (WQYNYPSTGPQTNH), and 162–184 (GNPNLTADHQYVSSGDPALQTSF). Residues 194 to 236 (QNPPLPPTFQPGAPPGPPPAGGPPPSRGPAPQKTPPRAAPPPS) are compositionally biased toward pro residues. Polar residues-rich tracts occupy residues 237–258 (FNSAVNQEGITSNANNGSTAAH), 274–286 (QLVNQNPKTSRSV), and 313–325 (SYPSGPQAFTQTP). Residues cysteine 428, cysteine 431, cysteine 449, and cysteine 452 each contribute to the Zn(2+) site. The interval 428–452 (CRSCRTYINPFVNFLDQRRWKCNLC) is zinc finger-like. Residues 963–1036 (PQPPILQLSV…PESARIAAFI (74 aa)) form a Gelsolin-like repeat.

It belongs to the SEC23/SEC24 family. SEC24 subfamily. As to quaternary structure, COPII is composed of at least five proteins: the Sec23/24 complex, the Sec13/31 complex and Sar1. Interacts with TMED2. Interacts (as part of the Sec23/24 complex) with SEC22B; recruits SEC22B into COPII-coated vesicles for its transport from the endoplasmic reticulum to the Golgi. Interacts with STING1; promoting STING1 translocation to COPII vesicles in a STEEP1-dependent manner. Interacts with TMEM39A. Interacts with SACM1L; this interaction is reduced in the absence of TMEM39A. Interacts with kinase FAM20C; transport of FAM20C from the endoplasmic reticulum to the Golgi is likely to be mediated by COPII vesicles.

The protein resides in the cytoplasmic vesicle. The protein localises to the COPII-coated vesicle membrane. It is found in the endoplasmic reticulum membrane. It localises to the cytoplasm. Its subcellular location is the cytosol. In terms of biological role, component of the coat protein complex II (COPII) which promotes the formation of transport vesicles from the endoplasmic reticulum (ER). The coat has two main functions, the physical deformation of the endoplasmic reticulum membrane into vesicles and the selection of cargo molecules for their transport to the Golgi complex. Plays a central role in cargo selection within the COPII complex and together with SEC24B may have a different specificity compared to SEC24C and SEC24D. May package preferentially cargos with cytoplasmic DxE or LxxLE motifs and may also recognize conformational epitopes. The sequence is that of Protein transport protein Sec24A from Mus musculus (Mouse).